A 234-amino-acid polypeptide reads, in one-letter code: Zinc finger FYVE domain-containing protein 21 (234 aa).

The FYVE-type zinc finger occupies 44–104; the sequence is DKECPRCMQC…QCADCALVSH (61 aa). Residues Cys-50, Cys-53, Cys-66, Cys-69, Cys-74, Cys-77, Cys-96, and Cys-99 each contribute to the Zn(2+) site. The segment at 107–234 is PH-like; it reads AEFYDKQLKV…TKLLYESRDQ (128 aa).

In terms of assembly, interacts with PTK2/FAK1.

It is found in the cell junction. Its subcellular location is the focal adhesion. It localises to the cytoplasmic vesicle. The protein resides in the endosome. In terms of biological role, plays a role in cell adhesion, and thereby in cell motility which requires repeated formation and disassembly of focal adhesions. Regulates microtubule-induced PTK2/FAK1 dephosphorylation, an event important for focal adhesion disassembly, as well as integrin beta-1/ITGB1 cell surface expression. The chain is Zinc finger FYVE domain-containing protein 21 (Zfyve21) from Rattus norvegicus (Rat).